Consider the following 61-residue polypeptide: Protein transport protein Sec61 subunit beta (61 aa).

At 1–35 the chain is on the cytoplasmic side; that stretch reads MKRPSTQRAPATVNKGGNSMMKFYSEDAIGLKVGP. Residues 36-56 form a helical membrane-spanning segment; it reads TAVLFMSLIFIAFVIILHIMG. The Extracellular portion of the chain corresponds to 57–61; it reads KYTRS.

It belongs to the SEC61-beta family. In terms of assembly, the SEC61 channel-forming translocon complex.

It is found in the endoplasmic reticulum membrane. Its function is as follows. Component of SEC61 channel-forming translocon complex that mediates transport of signal peptide-containing precursor polypeptides across the endoplasmic reticulum (ER). Forms a ribosome receptor and a gated pore in the ER membrane, both functions required for cotranslational translocation of nascent polypeptides. In Dictyostelium discoideum (Social amoeba), this protein is Protein transport protein Sec61 subunit beta (sec61b).